The following is a 149-amino-acid chain: Putative pre-16S rRNA nuclease (149 aa).

The protein belongs to the YqgF nuclease family.

The protein resides in the cytoplasm. In terms of biological role, could be a nuclease involved in processing of the 5'-end of pre-16S rRNA. The sequence is that of Putative pre-16S rRNA nuclease from Burkholderia lata (strain ATCC 17760 / DSM 23089 / LMG 22485 / NCIMB 9086 / R18194 / 383).